Here is a 204-residue protein sequence, read N- to C-terminus: Inner membrane-spanning protein YciB (204 aa).

A run of 5 helical transmembrane segments spans residues 48–68 (ILFATAIAILASVLQVGLYFF), 73–93 (FESMHLVTLGLVVVLGGATLM), 102–122 (WKPTVVNWLFGLAFLASQLFT), 147–167 (GAWIIFFLVSGLANLYVAYAF), and 170–190 (AVWVNFKLFGMLGLTLLFVVG).

The protein belongs to the YciB family.

Its subcellular location is the cell inner membrane. Functionally, plays a role in cell envelope biogenesis, maintenance of cell envelope integrity and membrane homeostasis. This is Inner membrane-spanning protein YciB from Nitrosococcus oceani (strain ATCC 19707 / BCRC 17464 / JCM 30415 / NCIMB 11848 / C-107).